Consider the following 474-residue polypeptide: Ribosomal protein uS12 methylthiotransferase RimO (474 aa).

Residues 37 to 147 (NRIGFVSLGC…VLNHVHKYVP (111 aa)) enclose the MTTase N-terminal domain. Residues Cys46, Cys82, Cys111, Cys179, Cys183, and Cys186 each contribute to the [4Fe-4S] cluster site. The 238-residue stretch at 165–402 (LTPKHYAYLK…MEVQAEISAE (238 aa)) folds into the Radical SAM core domain. In terms of domain architecture, TRAM spans 405–471 (ARLVGRELDI…EHDLWAELVA (67 aa)).

Belongs to the methylthiotransferase family. RimO subfamily. Requires [4Fe-4S] cluster as cofactor.

The protein resides in the cytoplasm. It catalyses the reaction L-aspartate(89)-[ribosomal protein uS12]-hydrogen + (sulfur carrier)-SH + AH2 + 2 S-adenosyl-L-methionine = 3-methylsulfanyl-L-aspartate(89)-[ribosomal protein uS12]-hydrogen + (sulfur carrier)-H + 5'-deoxyadenosine + L-methionine + A + S-adenosyl-L-homocysteine + 2 H(+). Catalyzes the methylthiolation of an aspartic acid residue of ribosomal protein uS12. The chain is Ribosomal protein uS12 methylthiotransferase RimO from Shewanella amazonensis (strain ATCC BAA-1098 / SB2B).